Reading from the N-terminus, the 491-residue chain is uncharacterized protein (491 aa).

The next 12 membrane-spanning stretches (helical) occupy residues 48–68, 85–105, 112–132, 140–160, 174–194, 202–222, 277–297, 317–337, 358–378, 383–403, 408–428, and 455–475; these read LILVSAFALLGPMASSMVAPC, ALILSIYLLVFAISPMISAPL, RMLLQVGNVIFIVFNMACGLA, IFRFLAGFGSATPMGLGSGTI, AVMSLAPLLGPTIGPVVSGFI, WIFWSTTIFSGFIFALSLPLL, PIVILCSTYMAIQYGILYLVL, LNYIASGIGLIFGSQASGIFI, VPVILLGTFFFPAGLFIYGWT, THWIGPDIGAAMFNIGLMLGW, TYLIDSFMIYAASSTAVACCV, and LLAFIVLGSSIITCSLLWFGG.

The protein belongs to the major facilitator superfamily.

Its subcellular location is the membrane. This is an uncharacterized protein from Schizosaccharomyces pombe (strain 972 / ATCC 24843) (Fission yeast).